Here is a 309-residue protein sequence, read N- to C-terminus: High-affinity zinc uptake system protein AztC (309 aa).

Positions 1-24 are cleaved as a signal peptide; it reads MKDWLFRIATCSIMTFSSLAAAQA. Residue H61 coordinates Zn(2+). The segment at 117–132 is D-loop; sequence GGGHYHYIDGKAVFHA. H138 provides a ligand contact to Zn(2+). Residues C158 and C165 are joined by a disulfide bond. H204 is a Zn(2+) binding site. The segment at 222–229 is Z-loop; sequence QGVSTESE. Residue D279 participates in Zn(2+) binding.

Belongs to the bacterial solute-binding protein 9 family. Monomer.

It localises to the periplasm. In terms of biological role, part of the ATP-binding cassette (ABC) transport system AztABCD involved in zinc import. Binds zinc with high affinity and specificity and delivers it to the membrane permease for translocation into the cytoplasm. This Paracoccus denitrificans (strain Pd 1222) protein is High-affinity zinc uptake system protein AztC.